An 80-amino-acid chain; its full sequence is Large ribosomal subunit protein uL24 (80 aa).

It belongs to the universal ribosomal protein uL24 family. In terms of assembly, part of the 50S ribosomal subunit.

In terms of biological role, one of two assembly initiator proteins, it binds directly to the 5'-end of the 23S rRNA, where it nucleates assembly of the 50S subunit. Functionally, one of the proteins that surrounds the polypeptide exit tunnel on the outside of the subunit. This Chlorobium phaeobacteroides (strain DSM 266 / SMG 266 / 2430) protein is Large ribosomal subunit protein uL24.